Consider the following 808-residue polypeptide: MTSSVRNGSPSPSPALPSTTTPAEQESRNAMTMANNPGDWDSSESRPQSLSNGKGIGNGMVANGHQKPSTSSTAASANNASAKDPLRPRRKKAKRACFACQRAHLTCGDERPCQRCIKRGLQDTCHDGVRKKAKYLHDAPNEALIPGIRGNLYNQAQAARNKVNSNSQQRNGTNSNSDNNSTNTNSNNKPSHQDVSTNFFSTPSANNYHNVYTQAKSRQSQHMPSRVMQDATMNPSAFQAQPPASPTFDLSSNPQNHTLSPSIAQNSGTTPSSSASQNPDPYGSTFFDPSHPALFNFDIASMNFGNRYGALEFGMLGHLATGAGDTPPSDTATRRGSIGRSSGTFTVQNFGEGSSNQSPFLFGGDPVLNDWNPAGQGPTNPRNIYNQNSVSGQMTDHPHAFAIESAPMNFASPTSTESPQMTTVTQFDDPSVNFSSRTTLMPPTNTQHQQQPQPPRISTPSLKNMQVGVKRRYRSPSSIYESVKEPYSYTSGFHSLTAFIQRRFSPQKTLQIAKALASIRPSFIATTKTLNQDDLIFMEKCFQRTLWEYEDFIDACGTPTIVCRRTGEIAAVGKEFSILTGWKKEVLLGKEPNLNVNTGGSSSSGVSSRGSSTYNSRNSATTTVMDNQSLPAGRTQPVFLAELLDDDSVIEFYEDFAKLAFGDSRGSVMTTCKLLKYKTKEDGVGLFRNSNGEVSAGGGDTDANDSAGAGVGDGTTTAVNGVSNGSSNNATNVNANGNVNVIPNDLSGASSMKSSPKQAWGKSRIAGEAGMNQLGFRDGKVECSYCWTVKRDVFDIPMLIVMNFLPCI.

Residues 1–90 form a disordered region; that stretch reads MTSSVRNGSP…SAKDPLRPRR (90 aa). Residues 69-83 show a composition bias toward low complexity; that stretch reads STSSTAASANNASAK. Positions 97 to 125 form a DNA-binding region, zn(2)-C6 fungal-type; sequence CFACQRAHLTCGDERPCQRCIKRGLQDTC. Polar residues predominate over residues 158–170; sequence AARNKVNSNSQQR. 5 disordered regions span residues 158–203, 236–285, 322–387, 442–461, and 598–629; these read AARN…FSTP, SAFQ…YGST, GAGD…IYNQ, PPTN…STPS, and TGGS…DNQS. Positions 171–188 are enriched in low complexity; the sequence is NGTNSNSDNNSTNTNSNN. Polar residues-rich tracts occupy residues 189 to 203, 248 to 279, 339 to 359, and 377 to 387; these read KPSH…FSTP, FDLS…SQNP, GRSS…NQSP, and GPTNPRNIYNQ. Low complexity-rich tracts occupy residues 442–451 and 598–619; these read PPTNTQHQQQ and TGGS…SRNS. A compositionally biased stretch (polar residues) spans 620–629; sequence ATTTVMDNQS.

It belongs to the ERT1/acuK family.

Its subcellular location is the nucleus. Functionally, transcription factor which regulates nonfermentable carbon utilization. Activator of gluconeogenetic genes. This is Transcription activator of gluconeogenesis PAAG_01030 from Paracoccidioides lutzii (strain ATCC MYA-826 / Pb01) (Paracoccidioides brasiliensis).